A 102-amino-acid chain; its full sequence is Thioredoxin (102 aa).

Positions 1–102 constitute a Thioredoxin domain; it reads MVQVVSQENF…SLIKLISKHQ (102 aa). Cys28 and Cys31 form a disulfide bridge.

This sequence belongs to the thioredoxin family.

In terms of biological role, participates in various redox reactions through the reversible oxidation of its active center dithiol to a disulfide and catalyzes dithiol-disulfide exchange reactions. This is Thioredoxin (trxA) from Chlamydia trachomatis serovar D (strain ATCC VR-885 / DSM 19411 / UW-3/Cx).